The following is a 235-amino-acid chain: Phosphoribosylaminoimidazole-succinocarboxamide synthase (235 aa).

It belongs to the SAICAR synthetase family.

The enzyme catalyses 5-amino-1-(5-phospho-D-ribosyl)imidazole-4-carboxylate + L-aspartate + ATP = (2S)-2-[5-amino-1-(5-phospho-beta-D-ribosyl)imidazole-4-carboxamido]succinate + ADP + phosphate + 2 H(+). Its pathway is purine metabolism; IMP biosynthesis via de novo pathway; 5-amino-1-(5-phospho-D-ribosyl)imidazole-4-carboxamide from 5-amino-1-(5-phospho-D-ribosyl)imidazole-4-carboxylate: step 1/2. This Chloroherpeton thalassium (strain ATCC 35110 / GB-78) protein is Phosphoribosylaminoimidazole-succinocarboxamide synthase.